We begin with the raw amino-acid sequence, 619 residues long: MSGLVLGQRDEPAGHRLSQEEILGSTRLVSQGLESLHSEHQAVLQSLSHTIECLQQGGHEEGLVHEKARQLRRSMENIELGLSEAQVMLALASHLSTVESEKQKLRAQVRRLCQENQWLRDELAGTQQRLQRSEQAVAQLEEEKKHLEFLRQLRQYDEDGHSMEEKEGDASKDSLDDLFPNEEEEDSSNDLSRGQGAAAAQQGGYEIPARLRTLHNLVIQYAAQGRYEVAVPLCKQALEDLERTSGRGHPDVATMLNILALVYRDQNKYKEAAHLLNDALSIRESTLGRDHPAVAATLNNLAVLYGKRGKYKEAEPLCQRALEIREKVLGTDHPDVAKQLNNLALLCQNQGKYEAVERYYQRALAIYERQLGPDNPNVARTKNNLASCYLKQGKYSEAETLYKEILTRAHVQEFGSVDDDHKPIWMHAEEREEMSRSRSRESGTPYAEYGGWYKACRVSSPTVNTTLRNLGALYRRQGKLEAAETLEECALRSRKQGTDPISQTKVAELLGEGDGRKTMQEGPGDSVKFEGGEDASVAVEWSGDGSGTLQRSGSLGKIRDVLRRSSELLVRKLQGTEPRPSSSNMKRAASLNYLNQPNAAPLQTSRGLSASTVDLSSSS.

Ser-2 is modified (N-acetylserine). A coiled-coil region spans residues 32-150; sequence GLESLHSEHQ…EEEKKHLEFL (119 aa). The stretch at 55–88 is one TPR 1 repeat; that stretch reads QQGGHEEGLVHEKARQLRRSMENIELGLSEAQVM. Residues 156-175 show a composition bias toward basic and acidic residues; the sequence is YDEDGHSMEEKEGDASKDSL. A disordered region spans residues 156–200; that stretch reads YDEDGHSMEEKEGDASKDSLDDLFPNEEEEDSSNDLSRGQGAAAA. At Ser-174 the chain carries Phosphoserine. The segment covering 179–188 has biased composition (acidic residues); that stretch reads FPNEEEEDSS. TPR repeat units lie at residues 211–244, 253–286, 295–328, 337–370, and 379–412; these read LRTLHNLVIQYAAQGRYEVAVPLCKQALEDLERT, ATMLNILALVYRDQNKYKEAAHLLNDALSIREST, AATLNNLAVLYGKRGKYKEAEPLCQRALEIREKV, AKQLNNLALLCQNQGKYEAVERYYQRALAIYERQ, and ARTKNNLASCYLKQGKYSEAETLYKEILTRAHVQ. Residue Ser-460 is modified to Phosphoserine. The TPR 7 repeat unit spans residues 464-497; it reads NTTLRNLGALYRRQGKLEAAETLEECALRSRKQG. Phosphoserine is present on residues Ser-565, Ser-566, and Ser-590. The tract at residues 571–619 is disordered; the sequence is RKLQGTEPRPSSSNMKRAASLNYLNQPNAAPLQTSRGLSASTVDLSSSS. Over residues 592 to 608 the composition is skewed to polar residues; it reads NYLNQPNAAPLQTSRGL. A compositionally biased stretch (low complexity) spans 609–619; sequence SASTVDLSSSS. Thr-612 is modified (phosphothreonine).

It belongs to the kinesin light chain family. Oligomeric complex composed of two heavy chains and two light chains.

Its subcellular location is the cytoplasm. The protein localises to the cytoskeleton. Kinesin is a microtubule-associated force-producing protein that may play a role in organelle transport. The light chain may function in coupling of cargo to the heavy chain or in the modulation of its ATPase activity. The chain is Kinesin light chain 4 (Klc4) from Rattus norvegicus (Rat).